The chain runs to 140 residues: Acyl-coenzyme A thioesterase PaaI (140 aa).

In terms of assembly, homotetramer.

The protein operates within aromatic compound metabolism; phenylacetate degradation. Functionally, thioesterase with a preference for ring-hydroxylated phenylacetyl-CoA esters. Hydrolyzes 3,4-dihydroxyphenylacetyl-CoA, 3-hydroxyphenylacetyl-CoA and 4-hydroxyphenylacetyl-CoA. Inactive towards 4-hydroxybenzoyl-CoA and 4-hydroxyphenacyl-CoA. The chain is Acyl-coenzyme A thioesterase PaaI (paaI) from Escherichia coli (strain K12).